We begin with the raw amino-acid sequence, 798 residues long: Integrin beta-1 (798 aa).

The N-terminal stretch at 1–20 is a signal peptide; it reads MNLQLIFWIGLISSVCCVFG. At 21-728 the chain is on the extracellular side; that stretch reads QADEDRCLKA…ETPECPTGPD (708 aa). Positions 26-76 constitute a PSI domain; it reads RCLKANAKSCGECIQAGPNCGWCTNSTFLQEGMPTSARCDDLEALKKKGCH. Cystine bridges form between Cys27–Cys45, Cys35–Cys464, Cys38–Cys64, Cys48–Cys75, Cys207–Cys213, Cys261–Cys301, Cys401–Cys415, Cys435–Cys462, Cys466–Cys486, Cys477–Cys489, Cys491–Cys500, Cys502–Cys533, Cys516–Cys531, Cys525–Cys536, Cys538–Cys553, Cys555–Cys576, Cys560–Cys574, Cys568–Cys579, Cys581–Cys590, Cys592–Cys615, Cys599–Cys613, Cys607–Cys618, Cys620–Cys630, Cys633–Cys636, Cys640–Cys691, Cys646–Cys665, Cys649–Cys661, and Cys699–Cys723. Basic and acidic residues predominate over residues 75-91; it reads CHPNDTENPRGSKDIKK. The segment at 75–105 is disordered; it reads CHPNDTENPRGSKDIKKNKNVTNRSKGTAEK. Residues Asn94 and Asn97 are each glycosylated (N-linked (GlcNAc...) asparagine). Residues 140-378 enclose the VWFA domain; that stretch reads DYPIDLYYLM…QLIIDAYNSL (239 aa). Residues Ser152 and Ser154 each coordinate Mg(2+). Residues Ser154, Asp157, Asp158, and Glu189 each contribute to the Ca(2+) site. The CX3CL1-binding stretch occupies residues 207–213; the sequence is CTNEQNC. Asn212 carries an N-linked (GlcNAc...) asparagine glycan. Residues Asn244, Asp246, Pro248, and Glu249 each coordinate Ca(2+). Residue Glu249 participates in Mg(2+) binding. Residue Asn269 is glycosylated (N-linked (GlcNAc...) asparagine). Residues 295 to 314 are CX3CL1-binding; the sequence is LPNDGQCHLKNDVYTMSHYY. Ala362 serves as a coordination point for Ca(2+). The interaction with TMEM182 stretch occupies residues 383–465; sequence ILENSKLPEG…IILQFICECE (83 aa). Asn406 and Asn417 each carry an N-linked (GlcNAc...) asparagine glycan. I-EGF domains follow at residues 466–501, 502–554, 555–591, and 592–631; these read CQGE…RHCE, CSTD…KFCE, CDNF…SACD, and CSLD…PTCE. N-linked (GlcNAc...) asparagine glycosylation occurs at Asn481. N-linked (GlcNAc...) asparagine glycosylation occurs at Asn520. Residue Asn584 is glycosylated (N-linked (GlcNAc...) asparagine). The N-linked (GlcNAc...) asparagine glycan is linked to Asn669. The helical transmembrane segment at 729-749 threads the bilayer; it reads IIPIVAGVVAGIVLIGLALLL. At 750–798 the chain is on the cytoplasmic side; the sequence is IWKLLMIIHDRREFAKFEKERMNAKWDTGENPIYKSAVTTVVNPKYEGK. Residues 762–767 form a signal for sorting from recycling endosomes; interaction with ACAP1 region; sequence EFAKFE. Thr777 is subject to Phosphothreonine. Tyr783 carries the phosphotyrosine modification. Phosphoserine is present on Ser785. The interval 785–792 is interaction with ITGB1BP1; that stretch reads SAVTTVVN. Thr789 carries the post-translational modification Phosphothreonine. Position 794 is an N6-acetyllysine; alternate (Lys794). Lys794 is covalently cross-linked (Glycyl lysine isopeptide (Lys-Gly) (interchain with G-Cter in SUMO1); alternate).

This sequence belongs to the integrin beta chain family. Interacts with seprase FAP (seprase); the interaction occurs at the cell surface of invadopodia membrane in a collagen-dependent manner. Heterodimer of an alpha and a beta subunit. Beta-1 associates with either alpha-1, alpha-2, alpha-3, alpha-4, alpha-5, alpha-6, alpha-7, alpha-8, alpha-9, alpha-10, alpha-11 or alpha-V. ITGA6:ITGB1 is found in a complex with CD9; interaction takes place in oocytes and is involved in sperm-egg fusion. Binds LGALS3BP and NMRK2, when associated with alpha-7, but not with alpha-5. Interacts with FLNA, FLNB, FLNC and RANBP9. Interacts with KRT1 in the presence of RACK1 and SRC. Interacts with JAML; integrin alpha-4/beta-1 may regulate leukocyte to endothelial cells adhesion by controlling JAML homodimerization. Interacts with RAB21. Interacts (via the cytoplasmic region) with RAB25 (via the hypervariable C-terminal region). Interacts with MYO10. Interacts with ITGB1BP1 (via C-terminal region); the interaction is a prerequisite for focal adhesion disassembly. Interacts with TLN1; the interaction is prevented by competitive binding of ITGB1BP1. Interacts with ACAP1; required for ITGB1 recycling. Interacts with ASAP3. Interacts with FERMT2; the interaction is inhibited in presence of ITGB1BP1. Interacts with DAB2. Interacts with FGR and HCK. Interacts with alpha-7A and alpha-7B in adult skeletal muscle. Interacts with alpha-7B in cardiomyocytes of adult heart. Interacts with EMP2; the interaction may be direct or indirect and ITGB1 has a heterodimer form. ITGA5:ITGB1 interacts with CCN3. ITGA4:ITGB1 is found in a ternary complex with CX3CR1 and CX3CL1. ITGA5:ITGB1 interacts with FBN1. ITGA5:ITGB1 acts as a receptor for fibronectin FN1 and mediates R-G-D-dependent cell adhesion to FN1. ITGA5:ITGB1 interacts with IL1B. Interacts with MDK. ITGA4:ITGB1 interacts with MDK; this interaction mediates MDK-induced osteoblast cells migration through PXN phosphorylation. ITGA6:ITGB1 interacts with MDK; this interaction mediates MDK-induced neurite-outgrowth. ITGA5:ITGB1 interacts with ACE2. Interacts with TMEM182 and LAMB1. Interacts with tensin TNS3; TNS3 also interacts with PEAK1, thus acting as an adapter molecule to bridge the association of PEAK1 with ITGB1. Interacts with tensin TNS4; the interaction displaces tensin TNS3 from the ITGB1 cytoplasmic tail and promotes ITGB1 stability. Integrin ITGA9:ITGB1 interacts with SPP1/OPN (via N-terminus). Integrin ITGA9:ITGB1 interacts with TNC/TNFN3 (via the 3rd Fibronectin type-III domain). Integrins ITGA4:ITGB1 and ITGA9:ITGB1 interact with SVEP1 (via Sushi domain 21); thereby inhibit Ca(2+) intracellular signaling and as a result repress vasocontraction. ITGA4:ITGB1 and ITGA5:ITGB1 interacts with SELP. Interacts with CD248. ITGA5:ITGB1 interacts with IGFBP1. ITGA4:ITGB1 interacts with BCAM. Interacts with ADGRG6.

The protein resides in the cell membrane. The protein localises to the cell projection. It localises to the invadopodium membrane. Its subcellular location is the ruffle membrane. It is found in the recycling endosome. The protein resides in the melanosome. The protein localises to the cell junction. It localises to the focal adhesion. Its subcellular location is the lamellipodium. It is found in the ruffle. Integrins alpha-1/beta-1, alpha-2/beta-1, alpha-10/beta-1 and alpha-11/beta-1 are receptors for collagen. Integrins alpha-1/beta-1 and alpha-2/beta-2 recognize the proline-hydroxylated sequence G-F-P-G-E-R in collagen. Integrins alpha-2/beta-1, alpha-3/beta-1, alpha-4/beta-1, alpha-5/beta-1, alpha-8/beta-1, alpha-10/beta-1, alpha-11/beta-1 and alpha-V/beta-1 are receptors for fibronectin. Alpha-4/beta-1 recognizes one or more domains within the alternatively spliced CS-1 and CS-5 regions of fibronectin. Integrin alpha-5/beta-1 is a receptor for fibrinogen. Integrin alpha-1/beta-1, alpha-2/beta-1, alpha-6/beta-1 and alpha-7/beta-1 are receptors for lamimin. Integrin alpha-6/beta-1 (ITGA6:ITGB1) is present in oocytes and is involved in sperm-egg fusion. Integrin alpha-4/beta-1 is a receptor for VCAM1 and recognizes the sequence Q-I-D-S in VCAM1. Integrin alpha-9/beta-1 is a receptor for VCAM1, cytotactin and osteopontin. It recognizes the sequence A-E-I-D-G-I-E-L in cytotactin. Integrin alpha-3/beta-1 is a receptor for epiligrin, thrombospondin and CSPG4. Integrin alpha-3/beta-1 provides a docking site for FAP (seprase) at invadopodia plasma membranes in a collagen-dependent manner and hence may participate in the adhesion, formation of invadopodia and matrix degradation processes, promoting cell invasion. Alpha-3/beta-1 may mediate with LGALS3 the stimulation by CSPG4 of endothelial cells migration. Integrin alpha-V/beta-1 is a receptor for vitronectin. Beta-1 integrins recognize the sequence R-G-D in a wide array of ligands. When associated with alpha-7/beta-1 integrin, regulates cell adhesion and laminin matrix deposition. Involved in promoting endothelial cell motility and angiogenesis. Involved in osteoblast compaction through the fibronectin fibrillogenesis cell-mediated matrix assembly process and the formation of mineralized bone nodules. May be involved in up-regulation of the activity of kinases such as PKC via binding to KRT1. Together with KRT1 and RACK1, serves as a platform for SRC activation or inactivation. Plays a mechanistic adhesive role during telophase, required for the successful completion of cytokinesis. ITGA4:ITGB1 binds to fractalkine (CX3CL1) and may act as its coreceptor in CX3CR1-dependent fractalkine signaling. ITGA4:ITGB1 and ITGA5:ITGB1 bind to PLA2G2A via a site (site 2) which is distinct from the classical ligand-binding site (site 1) and this induces integrin conformational changes and enhanced ligand binding to site 1. ITGA5:ITGB1 acts as a receptor for fibrillin-1 (FBN1) and mediates R-G-D-dependent cell adhesion to FBN1. ITGA5:ITGB1 is a receptor for IL1B and binding is essential for IL1B signaling. ITGA5:ITGB3 is a receptor for soluble CD40LG and is required for CD40/CD40LG signaling. Plays an important role in myoblast differentiation and fusion during skeletal myogenesis. ITGA9:ITGB1 may play a crucial role in SVEP1/polydom-mediated myoblast cell adhesion. Integrins ITGA9:ITGB1 and ITGA4:ITGB1 repress PRKCA-mediated L-type voltage-gated channel Ca(2+) influx and ROCK-mediated calcium sensitivity in vascular smooth muscle cells via their interaction with SVEP1, thereby inhibit vasocontraction. The chain is Integrin beta-1 from Camelus bactrianus (Bactrian camel).